The sequence spans 314 residues: DNA-directed RNA polymerase subunit alpha (314 aa).

Residues 1–228 are alpha N-terminal domain (alpha-NTD); that stretch reads MIEIEKPRIE…EHLNIFVGLT (228 aa). The interval 245–314 is alpha C-terminal domain (alpha-CTD); that stretch reads KEKVLEMSIE…DLGLGLRKED (70 aa).

Belongs to the RNA polymerase alpha chain family. As to quaternary structure, homodimer. The RNAP catalytic core consists of 2 alpha, 1 beta, 1 beta' and 1 omega subunit. When a sigma factor is associated with the core the holoenzyme is formed, which can initiate transcription.

It catalyses the reaction RNA(n) + a ribonucleoside 5'-triphosphate = RNA(n+1) + diphosphate. In terms of biological role, DNA-dependent RNA polymerase catalyzes the transcription of DNA into RNA using the four ribonucleoside triphosphates as substrates. The polypeptide is DNA-directed RNA polymerase subunit alpha (Staphylococcus saprophyticus subsp. saprophyticus (strain ATCC 15305 / DSM 20229 / NCIMB 8711 / NCTC 7292 / S-41)).